A 251-amino-acid chain; its full sequence is DNA repair protein RecO (251 aa).

This sequence belongs to the RecO family.

Involved in DNA repair and RecF pathway recombination. The polypeptide is DNA repair protein RecO (Lactococcus lactis subsp. cremoris (strain MG1363)).